The following is a 178-amino-acid chain: ATP synthase subunit b (178 aa).

A helical membrane pass occupies residues 30–50 (FFFVLAIFLIVLAVIGTFVVP).

This sequence belongs to the ATPase B chain family. As to quaternary structure, F-type ATPases have 2 components, F(1) - the catalytic core - and F(0) - the membrane proton channel. F(1) has five subunits: alpha(3), beta(3), gamma(1), delta(1), epsilon(1). F(0) has three main subunits: a(1), b(2) and c(10-14). The alpha and beta chains form an alternating ring which encloses part of the gamma chain. F(1) is attached to F(0) by a central stalk formed by the gamma and epsilon chains, while a peripheral stalk is formed by the delta and b chains.

It is found in the cell membrane. Functionally, f(1)F(0) ATP synthase produces ATP from ADP in the presence of a proton or sodium gradient. F-type ATPases consist of two structural domains, F(1) containing the extramembraneous catalytic core and F(0) containing the membrane proton channel, linked together by a central stalk and a peripheral stalk. During catalysis, ATP synthesis in the catalytic domain of F(1) is coupled via a rotary mechanism of the central stalk subunits to proton translocation. Its function is as follows. Component of the F(0) channel, it forms part of the peripheral stalk, linking F(1) to F(0). The polypeptide is ATP synthase subunit b (Mycobacterium avium (strain 104)).